We begin with the raw amino-acid sequence, 966 residues long: Catenin alpha-2 (966 aa).

The span at 924–940 (PEKKPLVKREKPEEYQT) shows a compositional bias: basic and acidic residues. A disordered region spans residues 924–952 (PEKKPLVKREKPEEYQTRVRRGSQKKHIS). Positions 941 to 951 (RVRRGSQKKHI) are enriched in basic residues.

Belongs to the vinculin/alpha-catenin family.

It localises to the cell membrane. The protein resides in the cytoplasm. It is found in the cytoskeleton. Its subcellular location is the cell junction. The protein localises to the adherens junction. It localises to the cell projection. The protein resides in the axon. It is found in the nucleus. May function as a linker between cadherin adhesion receptors and the cytoskeleton to regulate cell-cell adhesion and differentiation in the nervous system. The protein is Catenin alpha-2 (ctnna2) of Xenopus tropicalis (Western clawed frog).